Reading from the N-terminus, the 541-residue chain is T-complex protein 1 subunit epsilon (541 aa).

N-acetylalanine is present on alanine 2. Lysine 20 participates in a covalent cross-link: Glycyl lysine isopeptide (Lys-Gly) (interchain with G-Cter in SUMO2). Serine 26 is subject to Phosphoserine. Residue glycine 53 participates in ADP binding. Residue glycine 53 participates in ATP binding. Aspartate 104 contributes to the Mg(2+) binding site. Glycine 105, threonine 106, threonine 107, and serine 175 together coordinate ADP. Positions 106 and 107 each coordinate ATP. Glycyl lysine isopeptide (Lys-Gly) (interchain with G-Cter in SUMO2) cross-links involve residues lysine 210, lysine 214, lysine 265, lysine 275, and lysine 279. Serine 346 carries the post-translational modification Phosphoserine. Lysine 392 is covalently cross-linked (Glycyl lysine isopeptide (Lys-Gly) (interchain with G-Cter in SUMO2)). ADP is bound by residues glycine 422, aspartate 492, glutamate 508, and lysine 513. Glycine 422 is a binding site for ATP. The residue at position 539 (serine 539) is a Phosphoserine.

Belongs to the TCP-1 chaperonin family. As to quaternary structure, component of the chaperonin-containing T-complex (TRiC), a hexadecamer composed of two identical back-to-back stacked rings enclosing a protein folding chamber. Each ring is made up of eight different subunits: TCP1/CCT1, CCT2, CCT3, CCT4, CCT5, CCT6A/CCT6, CCT7, CCT8. Interacts with PACRG. Interacts with DNAAF4. Interacts with DLEC1. Interacts with SPMAP2. Post-translationally, ubiquitinated by the DCX(DCAF12) complex specifically recognizes the diglutamate (Glu-Glu) at the C-terminus, leading to its degradation.

It localises to the cytoplasm. The protein resides in the cytoskeleton. The protein localises to the microtubule organizing center. Its subcellular location is the centrosome. It catalyses the reaction ATP + H2O = ADP + phosphate + H(+). In terms of biological role, component of the chaperonin-containing T-complex (TRiC), a molecular chaperone complex that assists the folding of actin, tubulin and other proteins upon ATP hydrolysis. The TRiC complex mediates the folding of WRAP53/TCAB1, thereby regulating telomere maintenance. As part of the TRiC complex may play a role in the assembly of BBSome, a complex involved in ciliogenesis regulating transports vesicles to the cilia. The sequence is that of T-complex protein 1 subunit epsilon (CCT5) from Pongo abelii (Sumatran orangutan).